The following is a 91-amino-acid chain: Acyl carrier protein AsbD (91 aa).

Residues 4-82 (EALKNAVLKI…SLLDFMEELQ (79 aa)) form the Carrier domain. O-(pantetheine 4'-phosphoryl)serine is present on Ser40.

The protein belongs to the acyl carrier protein (ACP) family. Activated by the transfer of a 4'-phosphopantetheine group from CoA to Ser-40.

It participates in siderophore biosynthesis; petrobactin biosynthesis. Its function is as follows. Involved in the biosynthesis of petrobactin, a catecholate siderophore that functions in both iron acquisition and virulence. Aryl-carrier protein that activates 3,4-dihydroxybenzoate (3,4-DHBA) prior to its incorporation into petrobactin. The polypeptide is Acyl carrier protein AsbD (Bacillus anthracis).